The sequence spans 310 residues: 2-dehydro-3-deoxygluconokinase (310 aa).

Substrate-binding positions include 29 to 33 (GDTLN), Tyr89, 103 to 105 (YWR), and Arg171. ATP contacts are provided by residues 169-171 (NYR), 229-234 (KRGADA), and 262-265 (AAGD). Asp265 serves as a coordination point for substrate. The active-site Proton acceptor is the Asp265.

The protein belongs to the carbohydrate kinase PfkB family.

It catalyses the reaction 2-dehydro-3-deoxy-D-gluconate + ATP = 2-dehydro-3-deoxy-6-phospho-D-gluconate + ADP + H(+). It participates in carbohydrate acid metabolism; 2-dehydro-3-deoxy-D-gluconate degradation; D-glyceraldehyde 3-phosphate and pyruvate from 2-dehydro-3-deoxy-D-gluconate: step 1/2. Its function is as follows. Catalyzes the phosphorylation of 2-keto-3-deoxygluconate (KDG) to produce 2-keto-3-deoxy-6-phosphogluconate (KDPG). In Dickeya dadantii (strain 3937) (Erwinia chrysanthemi (strain 3937)), this protein is 2-dehydro-3-deoxygluconokinase.